Here is a 367-residue protein sequence, read N- to C-terminus: Zinc finger CCCH domain-containing protein 56 (367 aa).

The disordered stretch occupies residues 38 to 80 (YNSQWNADGGGGGSSRAGSEQPPPGKKSRGGGGGEGGGNTSKS). Positions 67 to 76 (GGGGGEGGGN) are enriched in gly residues. 3 C3H1-type zinc fingers span residues 87-114 (FFKT…HGME), 169-197 (AYKG…HDEQ), and 245-273 (NWKT…HGAA).

The sequence is that of Zinc finger CCCH domain-containing protein 56 from Oryza sativa subsp. japonica (Rice).